Here is a 130-residue protein sequence, read N- to C-terminus: MKILVAVAVIFFISTQLSAEEIGANDDFNYWSDWSDSDQIKEEMPEPFEHLLQRIARRPKPQQFFGLMGKRDADSSIEKQVALLKALYGHGQLSHKRHKTDSFVGLMGKRALNSVAYERSVMQDYERRRK.

The first 19 residues, 1 to 19, serve as a signal peptide directing secretion; the sequence is MKILVAVAVIFFISTQLSA. Positions 20–56 are excised as a propeptide; sequence EEIGANDDFNYWSDWSDSDQIKEEMPEPFEHLLQRIA. A methionine amide mark is found at Met-68 and Met-107.

Belongs to the tachykinin family. Post-translationally, the substance P form is cleaved at Pro-59 by the prolyl endopeptidase FAP (seprase) activity (in vitro). Substance P is also cleaved and degraded by Angiotensin-converting enzyme (ACE) and neprilysin (MME).

It localises to the secreted. Functionally, tachykinins are active peptides which excite neurons, evoke behavioral responses, are potent vasodilators and secretagogues, and contract (directly or indirectly) many smooth muscles. The protein is Protachykinin-1 (TAC1) of Bos taurus (Bovine).